We begin with the raw amino-acid sequence, 138 residues long: Acidic phospholipase A2 Cvv-E6b (138 aa).

Residues 1-16 (MRTLWILAVLLLGVEG) form the signal peptide. Cystine bridges form between C42/C131, C44/C60, C59/C111, C65/C138, C66/C104, C73/C97, and C91/C102. Ca(2+) contacts are provided by Y43, G45, and G47. The active site involves H63. D64 is a Ca(2+) binding site. D105 is an active-site residue.

Requires Ca(2+) as cofactor. Expressed by the venom gland.

It localises to the secreted. The catalysed reaction is a 1,2-diacyl-sn-glycero-3-phosphocholine + H2O = a 1-acyl-sn-glycero-3-phosphocholine + a fatty acid + H(+). Snake venom phospholipase A2 (PLA2) that shows very low inhibition of ADP-induced platelet aggregation in platelet-rich plasma of human, rabbit and guinea pig. PLA2 catalyzes the calcium-dependent hydrolysis of the 2-acyl groups in 3-sn-phosphoglycerides. This chain is Acidic phospholipase A2 Cvv-E6b, found in Crotalus viridis viridis (Prairie rattlesnake).